Here is a 160-residue protein sequence, read N- to C-terminus: Large ribosomal subunit protein eL21 (160 aa).

Basic and acidic residues-rich tracts occupy residues 112–123 (NDQKKKEAKEKG) and 136–145 (REAHFVRTNG). Residues 112–145 (NDQKKKEAKEKGTWVQLKRQPAPPREAHFVRTNG) are disordered.

This sequence belongs to the eukaryotic ribosomal protein eL21 family. As to quaternary structure, component of the large ribosomal subunit.

The protein localises to the cytoplasm. It is found in the cytosol. The protein resides in the endoplasmic reticulum. Functionally, component of the large ribosomal subunit. The ribosome is a large ribonucleoprotein complex responsible for the synthesis of proteins in the cell. The polypeptide is Large ribosomal subunit protein eL21 (RPL21) (Oryctolagus cuniculus (Rabbit)).